The sequence spans 273 residues: UPF0380 protein YubP (273 aa).

It belongs to the UPF0380 family.

This chain is UPF0380 protein YubP (yubP), found in Escherichia coli (strain K12).